The sequence spans 951 residues: Protein translocase subunit SecA 1 (951 aa).

ATP is bound by residues Gln-87, 105–109, and Asp-525; that span reads GEGKT. The interval 911 to 942 is disordered; that stretch reads PVVSADRSSRDPGNPASWGKVGRNEDCPCGSG. 4 residues coordinate Zn(2+): Cys-937, Cys-939, Cys-948, and His-949.

Belongs to the SecA family. In terms of assembly, monomer and homodimer. Part of the essential Sec protein translocation apparatus which comprises SecA, SecYEG and auxiliary proteins SecDF-YajC and YidC. It depends on Zn(2+) as a cofactor.

It localises to the cell inner membrane. The protein localises to the cytoplasm. It catalyses the reaction ATP + H2O + cellular proteinSide 1 = ADP + phosphate + cellular proteinSide 2.. Its function is as follows. Part of the Sec protein translocase complex. Interacts with the SecYEG preprotein conducting channel. Has a central role in coupling the hydrolysis of ATP to the transfer of proteins into and across the cell membrane, serving both as a receptor for the preprotein-SecB complex and as an ATP-driven molecular motor driving the stepwise translocation of polypeptide chains across the membrane. This is Protein translocase subunit SecA 1 from Nitrobacter hamburgensis (strain DSM 10229 / NCIMB 13809 / X14).